The sequence spans 112 residues: uncharacterized protein (112 aa).

A run of 2 helical transmembrane segments spans residues 7-26 and 36-58; these read PSFHFFIFFFLFCLLRTLDY and TYMHIKLFFSYYFRFVHLFFFLY.

It is found in the membrane. This is an uncharacterized protein from Saccharomyces cerevisiae (strain ATCC 204508 / S288c) (Baker's yeast).